The chain runs to 57 residues: MARRRRYEGLNPFVAAGLIKFSEEGELERIKLTPKSAVVISVALIAAILVLNLIHPL.

Topologically, residues 1–33 (MARRRRYEGLNPFVAAGLIKFSEEGELERIKLT) are cytoplasmic. Residues 34 to 55 (PKSAVVISVALIAAILVLNLIH) traverse the membrane as a helical segment. At 56-57 (PL) the chain is on the extracellular side.

The protein belongs to the SEC61-beta family. In terms of assembly, component of the protein translocase complex. Heterotrimer consisting of alpha (SecY), beta (SecG) and gamma (SecE) subunits. Can form oligomers of the heterotrimer.

It localises to the cell membrane. Involved in protein export. The function of the beta subunit is unknown, but it may be involved in stabilization of the trimeric complex. The sequence is that of Preprotein translocase subunit SecG from Pyrobaculum neutrophilum (strain DSM 2338 / JCM 9278 / NBRC 100436 / V24Sta) (Thermoproteus neutrophilus).